A 194-amino-acid chain; its full sequence is INO80 complex subunit 4 (194 aa).

2 disordered regions span residues 24–107 (KEKQ…NSGL) and 170–194 (STHA…ATGI). Composition is skewed to polar residues over residues 28-38 (NFTASPSSQPK) and 82-97 (SKPS…SAPK). S86 carries the phosphoserine modification. Position 90 is a phosphothreonine (T90).

In terms of assembly, component of the INO80 chromatin remodeling complex.

It localises to the cytoplasm. It is found in the nucleus. In terms of biological role, component of the INO80 complex which remodels chromatin by shifting nucleosomes and is involved in DNA repair. This is INO80 complex subunit 4 (ies4) from Schizosaccharomyces pombe (strain 972 / ATCC 24843) (Fission yeast).